Here is a 358-residue protein sequence, read N- to C-terminus: Peptide chain release factor 1 (358 aa).

Gln233 carries the N5-methylglutamine modification.

Belongs to the prokaryotic/mitochondrial release factor family. Methylated by PrmC. Methylation increases the termination efficiency of RF1.

The protein resides in the cytoplasm. Its function is as follows. Peptide chain release factor 1 directs the termination of translation in response to the peptide chain termination codons UAG and UAA. This is Peptide chain release factor 1 from Geobacillus sp. (strain WCH70).